Consider the following 580-residue polypeptide: Putative monoterpene synthase 8 (580 aa).

The N-terminal 44 residues, 1–44, are a transit peptide targeting the chloroplast; that stretch reads MACTSNLSSLSKSWAVLDVPRGAPKATGLWLKRQFIFKTSRICM. Mg(2+) contacts are provided by Asp-333, Asp-337, Asp-478, Thr-482, and Glu-486. Residues 333 to 337 carry the DDXXD motif motif; the sequence is DDIFD.

Belongs to the terpene synthase family. Tpsg subfamily. In terms of assembly, monomer. Mg(2+) is required as a cofactor. It depends on Mn(2+) as a cofactor. As to expression, confined to flowers.

It localises to the plastid. It is found in the chloroplast. It participates in secondary metabolite biosynthesis; terpenoid biosynthesis. In terms of biological role, monoterpene synthase (mono-TPS) involved in the biosynthesis of monoterpenes natural products, constituent of coffee beverage aroma. This chain is Putative monoterpene synthase 8, found in Coffea arabica (Arabian coffee).